Reading from the N-terminus, the 46-residue chain is Defensin-like protein 2 (46 aa).

Cystine bridges form between Cys-3–Cys-46, Cys-13–Cys-33, Cys-19–Cys-40, and Cys-23–Cys-42.

Monomer. Present in seeds, cotyledons and leaves. Not found in roots or stems.

In terms of biological role, has antibacterial activity against the Gram-positive bacterium S.aureus and the Gram-negative bacteria E.coli and P.syringae. Does not have antibacterial activity against the phytopathogenic bacteria R.solanacearum, Rhataybacter sp and Erwinia sp. Does not inhibit trypsin, chymotrypsin or alpha-amylases. The polypeptide is Defensin-like protein 2 (Vigna unguiculata (Cowpea)).